The chain runs to 435 residues: 3-phosphoshikimate 1-carboxyvinyltransferase (435 aa).

The 3-phosphoshikimate site is built by Lys-23, Ser-24, and Arg-28. Lys-23 provides a ligand contact to phosphoenolpyruvate. 2 residues coordinate phosphoenolpyruvate: Gly-96 and Arg-124. Residues Ser-167, Ser-168, Gln-169, Ser-196, Glu-311, and His-340 each contribute to the 3-phosphoshikimate site. Gln-169 contributes to the phosphoenolpyruvate binding site. Glu-311 serves as the catalytic Proton acceptor. Phosphoenolpyruvate-binding residues include Arg-344, Arg-385, and Lys-410.

The protein belongs to the EPSP synthase family. As to quaternary structure, monomer.

The protein localises to the cytoplasm. The enzyme catalyses 3-phosphoshikimate + phosphoenolpyruvate = 5-O-(1-carboxyvinyl)-3-phosphoshikimate + phosphate. Its pathway is metabolic intermediate biosynthesis; chorismate biosynthesis; chorismate from D-erythrose 4-phosphate and phosphoenolpyruvate: step 6/7. In terms of biological role, catalyzes the transfer of the enolpyruvyl moiety of phosphoenolpyruvate (PEP) to the 5-hydroxyl of shikimate-3-phosphate (S3P) to produce enolpyruvyl shikimate-3-phosphate and inorganic phosphate. The polypeptide is 3-phosphoshikimate 1-carboxyvinyltransferase (Mycolicibacterium paratuberculosis (strain ATCC BAA-968 / K-10) (Mycobacterium paratuberculosis)).